The primary structure comprises 592 residues: V-type ATP synthase alpha chain 2 (592 aa).

Gly-237–Thr-244 contacts ATP.

Belongs to the ATPase alpha/beta chains family.

It catalyses the reaction ATP + H2O + 4 H(+)(in) = ADP + phosphate + 5 H(+)(out). Produces ATP from ADP in the presence of a proton gradient across the membrane. The V-type alpha chain is a catalytic subunit. This chain is V-type ATP synthase alpha chain 2, found in Clostridium tetani (strain Massachusetts / E88).